Consider the following 411-residue polypeptide: Acetyl-coenzyme A carboxylase carboxyl transferase subunit beta, chloroplastic (411 aa).

One can recognise a CoA carboxyltransferase N-terminal domain in the interval Leu32–Glu302. Cys36, Cys39, Cys55, and Cys58 together coordinate Zn(2+). Residues Cys36 to Cys58 form a C4-type zinc finger.

Belongs to the AccD/PCCB family. In terms of assembly, acetyl-CoA carboxylase is a heterohexamer composed of biotin carboxyl carrier protein, biotin carboxylase and 2 subunits each of ACCase subunit alpha and ACCase plastid-coded subunit beta (accD). Zn(2+) serves as cofactor.

It localises to the plastid. The protein localises to the chloroplast stroma. It carries out the reaction N(6)-carboxybiotinyl-L-lysyl-[protein] + acetyl-CoA = N(6)-biotinyl-L-lysyl-[protein] + malonyl-CoA. Its pathway is lipid metabolism; malonyl-CoA biosynthesis; malonyl-CoA from acetyl-CoA: step 1/1. In terms of biological role, component of the acetyl coenzyme A carboxylase (ACC) complex. Biotin carboxylase (BC) catalyzes the carboxylation of biotin on its carrier protein (BCCP) and then the CO(2) group is transferred by the transcarboxylase to acetyl-CoA to form malonyl-CoA. The protein is Acetyl-coenzyme A carboxylase carboxyl transferase subunit beta, chloroplastic of Chlorella vulgaris (Green alga).